Here is a 201-residue protein sequence, read N- to C-terminus: Glutathione peroxidase 1 (201 aa).

A Phosphoserine modification is found at Ser-32. The active site involves Sec-47. Residue Sec-47 is a non-standard amino acid, selenocysteine. 2 positions are modified to N6-acetyllysine; alternate: Lys-86 and Lys-112. Lys-86 and Lys-112 each carry N6-succinyllysine; alternate. N6-acetyllysine is present on Lys-119. N6-acetyllysine; alternate is present on Lys-146. Position 146 is an N6-succinyllysine; alternate (Lys-146). 2 positions are modified to phosphoserine: Ser-195 and Ser-199.

It belongs to the glutathione peroxidase family. As to quaternary structure, homotetramer. Interacts with MIEN1. In terms of processing, during periods of oxidative stress, Sec-47 may react with a superoxide radical, irreversibly lose hydroselenide and be converted to dehydroalanine. In terms of tissue distribution, expressed in liver and lung.

The protein localises to the cytoplasm. It is found in the mitochondrion. The catalysed reaction is 2 glutathione + H2O2 = glutathione disulfide + 2 H2O. It catalyses the reaction a hydroperoxy polyunsaturated fatty acid + 2 glutathione = a hydroxy polyunsaturated fatty acid + glutathione disulfide + H2O. The enzyme catalyses tert-butyl hydroperoxide + 2 glutathione = tert-butanol + glutathione disulfide + H2O. It carries out the reaction cumene hydroperoxide + 2 glutathione = 2-phenylpropan-2-ol + glutathione disulfide + H2O. The catalysed reaction is (13S)-hydroperoxy-(9Z,11E)-octadecadienoate + 2 glutathione = (13S)-hydroxy-(9Z,11E)-octadecadienoate + glutathione disulfide + H2O. It catalyses the reaction (9S)-hydroperoxy-(10E,12Z)-octadecadienoate + 2 glutathione = (9S)-hydroxy-(10E,12Z)-octadecadienoate + glutathione disulfide + H2O. The enzyme catalyses (5S)-hydroperoxy-(6E,8Z,11Z,14Z)-eicosatetraenoate + 2 glutathione = (5S)-hydroxy-(6E,8Z,11Z,14Z)-eicosatetraenoate + glutathione disulfide + H2O. It carries out the reaction (12S)-hydroperoxy-(5Z,8Z,10E,14Z)-eicosatetraenoate + 2 glutathione = (12S)-hydroxy-(5Z,8Z,10E,14Z)-eicosatetraenoate + glutathione disulfide + H2O. The catalysed reaction is (12R)-hydroperoxy-(5Z,8Z,10E,14Z)-eicosatetraenoate + 2 glutathione = (12R)-hydroxy-(5Z,8Z,10E,14Z)-eicosatetraenoate + glutathione disulfide + H2O. It catalyses the reaction (15S)-hydroperoxy-(5Z,8Z,11Z,13E)-eicosatetraenoate + 2 glutathione = (15S)-hydroxy-(5Z,8Z,11Z,13E)-eicosatetraenoate + glutathione disulfide + H2O. The enzyme catalyses (5S)-hydroperoxy-(6E,8Z,11Z,14Z,17Z)-eicosapentaenoate + 2 glutathione = (5S)-hydroxy-(6E,8Z,11Z,14Z,17Z)-eicosapentaenoate + glutathione disulfide + H2O. It carries out the reaction (12S)-hydroperoxy-(5Z,8Z,10E,14Z,17Z)-eicosapentaenoate + 2 glutathione = (12S)-hydroxy-(5Z,8Z,10E,14Z,17Z)-eicosapentaenoate + glutathione disulfide + H2O. The catalysed reaction is (15S)-hydroperoxy-(5Z,8Z,11Z,13E,17Z)-eicosapentaenoate + 2 glutathione = (15S)-hydroxy-(5Z,8Z,11Z,13E,17Z)-eicosapentaenoate + glutathione disulfide + H2O. It catalyses the reaction (15S)-hydroperoxy-(11Z,13E)-eicosadienoate + 2 glutathione = (15S)-hydroxy-(11Z,13E)-eicosadienoate + glutathione disulfide + H2O. The enzyme catalyses (17S)-hydroperoxy-(4Z,7Z,10Z,13Z,15E,19Z)-docosahexaenoate + 2 glutathione = (17S)-hydroxy-(4Z,7Z,10Z,13Z,15E,19Z)-docosahexaenoate + glutathione disulfide + H2O. Its function is as follows. Catalyzes the reduction of hydroperoxides in a glutathione-dependent manner thus regulating cellular redox homeostasis. Can reduce small soluble hydroperoxides such as H2O2, cumene hydroperoxide and tert-butyl hydroperoxide, as well as several fatty acid-derived hydroperoxides. In platelets catalyzes the reduction of 12-hydroperoxyeicosatetraenoic acid, the primary product of the arachidonate 12-lipoxygenase pathway. The chain is Glutathione peroxidase 1 from Rattus norvegicus (Rat).